The primary structure comprises 318 residues: UAP56-interacting factor (318 aa).

At M1 the chain carries N-acetylmethionine. The disordered stretch occupies residues 1-25; that stretch reads MNRFGTRLVGATATSSPPPKARSNE. T14 is modified (phosphothreonine). A phosphoserine mark is found at S16 and S23. The UAP56-binding motif motif lies at 26–44; that stretch reads NLDKIDMSLDDIIKLNRKE. The residue at position 61 (S61) is a Phosphoserine. The tract at residues 79 to 100 is disordered; it reads GFGKTSLNRRGRVMPGKRRPNG. Positions 85–98 are enriched in basic residues; that stretch reads LNRRGRVMPGKRRP. S118 is subject to Phosphoserine. Residue K140 forms a Glycyl lysine isopeptide (Lys-Gly) (interchain with G-Cter in SUMO1) linkage. K261 participates in a covalent cross-link: Glycyl lysine isopeptide (Lys-Gly) (interchain with G-Cter in SUMO2).

Belongs to the UIF family. In terms of assembly, interacts with CHTOP. Interacts with DDX39B/UAP56 and NXF1; interaction with DDX39B/UAP56 and NXF1 are mutually exclusive. Interacts with SSRP1; required for its recruitment to mRNAs. Expressed in a wide variety of cancer types.

It is found in the nucleus. It localises to the nucleoplasm. The protein localises to the nucleus speckle. In terms of biological role, required for mRNA export from the nucleus to the cytoplasm. Acts as an adapter that uses the DDX39B/UAP56-NFX1 pathway to ensure efficient mRNA export and delivering to the nuclear pore. Associates with spliced and unspliced mRNAs simultaneously with ALYREF/THOC4. The sequence is that of UAP56-interacting factor (FYTTD1) from Homo sapiens (Human).